A 304-amino-acid polypeptide reads, in one-letter code: Oxygen-dependent coproporphyrinogen-III oxidase (304 aa).

A substrate-binding site is contributed by Ser-94. The a divalent metal cation site is built by His-98 and His-108. His-108 (proton donor) is an active-site residue. Residue 110–112 participates in substrate binding; that stretch reads NVR. A divalent metal cation is bound by residues His-147 and His-177. The important for dimerization stretch occupies residues 242 to 277; the sequence is YVEFNLVYDRGTLFGLQTGGRTESILMSMPPLVRWQ. 260–262 contacts substrate; sequence GGR.

The protein belongs to the aerobic coproporphyrinogen-III oxidase family. As to quaternary structure, homodimer. A divalent metal cation serves as cofactor.

Its subcellular location is the cytoplasm. The catalysed reaction is coproporphyrinogen III + O2 + 2 H(+) = protoporphyrinogen IX + 2 CO2 + 2 H2O. It participates in porphyrin-containing compound metabolism; protoporphyrin-IX biosynthesis; protoporphyrinogen-IX from coproporphyrinogen-III (O2 route): step 1/1. In terms of biological role, involved in the heme biosynthesis. Catalyzes the aerobic oxidative decarboxylation of propionate groups of rings A and B of coproporphyrinogen-III to yield the vinyl groups in protoporphyrinogen-IX. This chain is Oxygen-dependent coproporphyrinogen-III oxidase, found in Shewanella amazonensis (strain ATCC BAA-1098 / SB2B).